A 626-amino-acid chain; its full sequence is Carnitine O-acetyltransferase (626 aa).

N6-succinyllysine is present on lysine 93. N6-acetyllysine; alternate is present on lysine 261. At lysine 261 the chain carries N6-succinyllysine; alternate. An N6-acetyllysine modification is found at lysine 268. Histidine 343 serves as the catalytic Proton acceptor. CoA-binding positions include lysine 419 and 423 to 430 (KSQKLSPD). Positions 452 and 454 each coordinate (R)-carnitine. Position 456 (serine 456) interacts with CoA. Position 465 (threonine 465) interacts with (R)-carnitine. Residues arginine 504 and glutamine 555 each coordinate CoA. The Microbody targeting signal motif lies at 624–626 (AKL).

It belongs to the carnitine/choline acetyltransferase family. In terms of assembly, monomer. As to expression, expressed in flagella of epididymal sperm.

The protein resides in the endoplasmic reticulum. Its subcellular location is the peroxisome. It is found in the mitochondrion inner membrane. It carries out the reaction (R)-carnitine + acetyl-CoA = O-acetyl-(R)-carnitine + CoA. The enzyme catalyses propanoyl-CoA + (R)-carnitine = O-propanoyl-(R)-carnitine + CoA. The catalysed reaction is butanoyl-CoA + (R)-carnitine = O-butanoyl-(R)-carnitine + CoA. It catalyses the reaction hexanoyl-CoA + (R)-carnitine = O-hexanoyl-(R)-carnitine + CoA. It carries out the reaction octanoyl-CoA + (R)-carnitine = O-octanoyl-(R)-carnitine + CoA. The enzyme catalyses decanoyl-CoA + (R)-carnitine = O-decanoyl-(R)-carnitine + CoA. The catalysed reaction is 3-methylbutanoyl-CoA + (R)-carnitine = O-3-methylbutanoyl-(R)-carnitine + CoA. It catalyses the reaction 2-methylpropanoyl-CoA + (R)-carnitine = O-isobutanoyl-(R)-carnitine + CoA. It carries out the reaction 2-methylbutanoyl-CoA + (R)-carnitine = O-2-methylbutanoyl-(R)-carnitine + CoA. The enzyme catalyses acetoacetyl-CoA + (R)-carnitine = O-3-oxobutanoyl-(R)-carnitine + CoA. The catalysed reaction is 3-hydroxybutanoyl-CoA + (R)-carnitine = O-3-hydroxybutanoyl-(R)-carnitine + CoA. It catalyses the reaction 4,8-dimethylnonanoyl-CoA + (R)-carnitine = O-4,8-dimethylnonanoyl-(R)-carnitine + CoA. It carries out the reaction 2,6-dimethylheptanoyl-CoA + (R)-carnitine = O-2,6-dimethylheptanoyl-(R)-carnitine + CoA. Functionally, catalyzes the reversible transfer of acyl groups from carnitine to coenzyme A (CoA) and regulates the acyl-CoA/CoA ratio. Also plays a crucial role in the transport of fatty acids for beta-oxidation. Responsible for the synthesis of short- and branched-chain acylcarnitines. Active towards some branched-chain amino acid oxidation pathway (BCAAO) intermediates. Trans-2-enoyl-CoAs and 2-methylacyl-CoAs are poor substrates. This chain is Carnitine O-acetyltransferase, found in Rattus norvegicus (Rat).